A 182-amino-acid polypeptide reads, in one-letter code: A-type ATP synthase subunit E (182 aa).

It belongs to the V-ATPase E subunit family. As to quaternary structure, has multiple subunits with at least A(3), B(3), C, D, E, F, H, I and proteolipid K(x).

Its subcellular location is the cell membrane. Its function is as follows. Component of the A-type ATP synthase that produces ATP from ADP in the presence of a proton gradient across the membrane. In Picrophilus torridus (strain ATCC 700027 / DSM 9790 / JCM 10055 / NBRC 100828 / KAW 2/3), this protein is A-type ATP synthase subunit E.